The primary structure comprises 1263 residues: DNA-directed RNA polymerase subunit beta (1263 aa).

Belongs to the RNA polymerase beta chain family. In terms of assembly, the RNAP catalytic core consists of 2 alpha, 1 beta, 1 beta' and 1 omega subunit. When a sigma factor is associated with the core the holoenzyme is formed, which can initiate transcription.

It catalyses the reaction RNA(n) + a ribonucleoside 5'-triphosphate = RNA(n+1) + diphosphate. DNA-dependent RNA polymerase catalyzes the transcription of DNA into RNA using the four ribonucleoside triphosphates as substrates. The polypeptide is DNA-directed RNA polymerase subunit beta (Thermotoga maritima (strain ATCC 43589 / DSM 3109 / JCM 10099 / NBRC 100826 / MSB8)).